Reading from the N-terminus, the 512-residue chain is Probable DNA ligase (512 aa).

ATP is bound at residue glutamate 208. Lysine 210 functions as the N6-AMP-lysine intermediate in the catalytic mechanism. ATP-binding residues include arginine 215, arginine 230, glutamate 259, phenylalanine 299, arginine 374, and lysine 380.

Belongs to the ATP-dependent DNA ligase family. Mg(2+) is required as a cofactor.

It catalyses the reaction ATP + (deoxyribonucleotide)n-3'-hydroxyl + 5'-phospho-(deoxyribonucleotide)m = (deoxyribonucleotide)n+m + AMP + diphosphate.. In terms of biological role, DNA ligase that seals nicks in double-stranded DNA during DNA replication, DNA recombination and DNA repair. This chain is Probable DNA ligase, found in Streptomyces avermitilis (strain ATCC 31267 / DSM 46492 / JCM 5070 / NBRC 14893 / NCIMB 12804 / NRRL 8165 / MA-4680).